The primary structure comprises 63 residues: Parvalbumin alpha (63 aa).

2 EF-hand domains span residues 28 to 38 (IEEEELGLILK) and 39 to 63 (VLLAAGDKDGDGKIGVDEFVTLVSE). Ca(2+) contacts are provided by Glu29, Glu32, Asp45, Asp47, Asp49, Lys51, and Glu56.

In terms of tissue distribution, detected in muscle and cutaneous mucus. In the skin, detected in cells in the basal region of the glandular epithelium of the dermal mucus glands (at protein level).

Its subcellular location is the cytoplasm. It localises to the secreted. In terms of biological role, in muscle, parvalbumin is thought to be involved in relaxation after contraction. It binds two calcium ions. This is Parvalbumin alpha from Rana temporaria (European common frog).